We begin with the raw amino-acid sequence, 475 residues long: LEC14B homolog (475 aa).

Positions 1–34 are disordered; that stretch reads MSYRTRFGKDNSACDSGNAVEGSGSSKGPNEVSN. A compositionally biased stretch (polar residues) spans 23-33; that stretch reads SGSSKGPNEVS. WD repeat units lie at residues 211–240, 252–283, 299–329, 375–411, and 423–453; these read DEFGIFSVRFSTDGRELVAASRDASIYVYD, AHSSDVNTVCFADETGHLIYSGSDDNLCKVWD, GHLEGVTFIDSRGDGRYFISNGKDQTTQLWD, GHGVLRTLIRCYLSPAYSTGQKYIYTGSSDHCVYIYD, and HHEGPVRDCSWHPLYPMLVSSSWDGTIARWE.

The protein belongs to the WD repeat LEC14B family.

The polypeptide is LEC14B homolog (Prunus armeniaca (Apricot)).